Here is a 211-residue protein sequence, read N- to C-terminus: Small ribosomal subunit protein uS3 (211 aa).

Residues 38–106 enclose the KH type-2 domain; sequence LRKFIKKAFY…NIELNIIEVK (69 aa).

This sequence belongs to the universal ribosomal protein uS3 family. In terms of assembly, part of the 30S ribosomal subunit. Forms a tight complex with proteins S10 and S14.

Its function is as follows. Binds the lower part of the 30S subunit head. Binds mRNA in the 70S ribosome, positioning it for translation. This is Small ribosomal subunit protein uS3 from Ehrlichia canis (strain Jake).